The chain runs to 225 residues: Single-pass membrane and coiled-coil domain-containing protein 3 (225 aa).

The stretch at I62–E92 forms a coiled coil. Residues I155–I175 form a helical membrane-spanning segment. Residues V183 to E207 are a coiled coil.

The protein localises to the membrane. The chain is Single-pass membrane and coiled-coil domain-containing protein 3 (SMCO3) from Homo sapiens (Human).